Consider the following 7524-residue polypeptide: Mucin-19 (7524 aa).

A signal peptide spans 1–20 (MKLILLYLAVVLCFVGKGAA). The tract at residues 20-47 (ARSPTTTRTPTPSTSEKASHVPEATPTY) is disordered. The segment covering 21-34 (RSPTTTRTPTPSTS) has biased composition (low complexity). In terms of domain architecture, VWFD 1 spans 55-225 (GEATMWGKDK…VCEDGVQYCD (171 aa)). C79 and C224 are oxidised to a cystine. The TIL domain occupies 298–353 (CPGKHIYKECGPSNPPTCSNVAPFQDSECVSGCTCPEGYLLDDIGEKGKCVLKEKC). VWFD domains are found at residues 392–568 (GICK…EGSP) and 851–1025 (STCH…QECS). 6 disulfides stabilise this stretch: C394–C529, C434–C442, C853–C989, C875–C1024, C884–C986, and C900–C907. Over residues 1244–1261 (AAATRASSSTSGSVETSV) the composition is skewed to low complexity. 2 disordered regions span residues 1244-7217 (AAAT…SSLA) and 7249-7297 (SVIK…CPDS). Over residues 1262-1289 (PATTSTSKAQAHITTASSTETSALNSTA) the composition is skewed to polar residues. Composition is skewed to low complexity over residues 1320 to 7099 (PAVS…AGSG) and 7112 to 7217 (STSG…SSLA). 36 tandem repeats follow at residues 1321–1483 (AVST…TTGP), 1484–1646 (AVST…TTGP), 1647–1809 (AVST…TTGP), 1810–1972 (AVST…TTGP), 1973–2135 (AVST…TTGP), 2136–2298 (AVST…TTGP), 2299–2461 (AVST…TTGP), 2462–2624 (AVST…TTGP), 2625–2787 (AVST…TTGP), 2788–2950 (AVST…TTGP), 2951–3113 (AVST…TTGP), 3114–3276 (AVST…TTGP), 3277–3439 (AVST…TTGP), 3440–3602 (AVST…TTGP), 3603–3765 (AVST…TTGP), 3766–3928 (AVST…TTGP), 3929–4091 (AVST…TTGP), 4092–4254 (AVST…TTGP), 4255–4417 (AVST…TTGP), 4418–4580 (AVST…TTGP), 4581–4743 (AVST…TTGP), 4744–4906 (AVST…TTGP), 4907–5069 (AVST…TTGP), 5070–5232 (AVST…TTGP), 5233–5395 (AVST…TTGP), 5396–5558 (AVST…TTGP), 5559–5721 (AVST…TTGP), 5722–5884 (AVST…TTGP), 5885–6047 (AVST…TTGP), 6048–6210 (AVST…TTGP), 6211–6373 (AVST…TTGP), 6374–6536 (AVST…TTGP), 6537–6699 (AVST…TTGP), 6700–6862 (AVST…TTGP), 6863–7025 (AVST…TTGP), and 7026–7188 (AVST…TTGP). The approximate repeats stretch occupies residues 1321-7188 (AVSTTSAGST…AETAGSTTGP (5868 aa)). Positions 7261-7291 (AKSNETTGRTTSMPASTSVAPGVTTSPNISQ) are enriched in polar residues. VWFC domains are found at residues 7302-7368 (PVCH…GHCE) and 7370-7432 (RTCL…YKCK). 4 disulfides stabilise this stretch: C7435–C7482, C7449–C7496, C7458–C7512, and C7462–C7514. Residues 7435-7519 (CRTTPVNVTV…TTCSCRDQCE (85 aa)) enclose the CTCK domain.

In terms of tissue distribution, specifically expressed in sublingual salivary glands. Expressed by mucous cells of the submandibular gland and submucosal gland of the trachea. Expression is altered in sld (sublingual gland differentiation arrest) mutants.

Its subcellular location is the secreted. Its function is as follows. May function in ocular mucus homeostasis. The sequence is that of Mucin-19 (Muc19) from Mus musculus (Mouse).